Reading from the N-terminus, the 290-residue chain is ATP synthase gamma chain (290 aa).

It belongs to the ATPase gamma chain family. As to quaternary structure, F-type ATPases have 2 components, CF(1) - the catalytic core - and CF(0) - the membrane proton channel. CF(1) has five subunits: alpha(3), beta(3), gamma(1), delta(1), epsilon(1). CF(0) has three main subunits: a, b and c.

The protein localises to the cell membrane. Produces ATP from ADP in the presence of a proton gradient across the membrane. The gamma chain is believed to be important in regulating ATPase activity and the flow of protons through the CF(0) complex. This Wolbachia sp. subsp. Brugia malayi (strain TRS) protein is ATP synthase gamma chain.